The following is a 411-amino-acid chain: 4-coumarate--CoA ligase (411 aa).

Belongs to the ATP-dependent AMP-binding enzyme family.

The catalysed reaction is (E)-4-coumarate + ATP + CoA = (E)-4-coumaroyl-CoA + AMP + diphosphate. In terms of biological role, converts p-coumaric acid into p-coumaryl CoA. This is necessary for the activation of the photoactive yellow protein (PYP) chromophore. The chain is 4-coumarate--CoA ligase (pcl) from Cereibacter sphaeroides (strain ATCC 17023 / DSM 158 / JCM 6121 / CCUG 31486 / LMG 2827 / NBRC 12203 / NCIMB 8253 / ATH 2.4.1.) (Rhodobacter sphaeroides).